A 314-amino-acid chain; its full sequence is Lysophospholipase D GDPD1 (314 aa).

Topologically, residues 1–3 (MSS) are extracellular. Residues 4–24 (TAAFYLLSTLGGYLVTSFLLL) form a helical membrane-spanning segment. Over 25–195 (KYPTLLHQRK…VEKCYKENSD (171 aa)) the chain is Cytoplasmic. The region spanning 40 to 309 (SKHISHRGGA…DYPTKLRDFL (270 aa)) is the GP-PDE domain. A divalent metal cation is bound by residues Glu-72, Asp-74, and His-87. A helical transmembrane segment spans residues 196–216 (IPILFSLQRVLLILGLFFTGL). At 217 to 314 (LPFVPIREQF…LRDFLHNFSA (98 aa)) the chain is on the extracellular side.

The protein belongs to the glycerophosphoryl diester phosphodiesterase family. In terms of tissue distribution, widely expressed with high expression level in testis.

It is found in the cytoplasm. Its subcellular location is the membrane. It localises to the perinuclear region. The protein resides in the endoplasmic reticulum. It catalyses the reaction a 1-O-alkyl-sn-glycero-3-phosphocholine + H2O = a 1-O-alkyl-sn-glycero-3-phosphate + choline + H(+). The catalysed reaction is 1-hexadecanoyl-sn-glycero-3-phosphocholine + H2O = 1-hexadecanoyl-sn-glycero-3-phosphate + choline + H(+). The enzyme catalyses N-hexadecanoyl-sn-glycero-3-phosphoethanolamine + H2O = N-hexadecanoylethanolamine + sn-glycerol 3-phosphate + H(+). It carries out the reaction N-(5Z,8Z,11Z,14Z-eicosatetraenoyl)-1-(9Z-octadecenoyl)-sn-glycero-3-phosphoethanolamine + H2O = N-(5Z,8Z,11Z,14Z-eicosatetraenoyl)-ethanolamine + 1-(9Z-octadecenoyl)-sn-glycero-3-phosphate + H(+). It catalyses the reaction N,1-di-(9Z-octadecenoyl)-sn-glycero-3-phosphoethanolamine + H2O = N-(9Z-octadecenoyl) ethanolamine + 1-(9Z-octadecenoyl)-sn-glycero-3-phosphate + H(+). The catalysed reaction is N-hexadecanoyl-1-(9Z-octadecenoyl)-sn-glycero-3-phosphoethanolamine + H2O = N-hexadecanoylethanolamine + 1-(9Z-octadecenoyl)-sn-glycero-3-phosphate + H(+). The enzyme catalyses 1-O-(1Z-octadecenyl)-sn-glycero-3-phospho-N-hexadecanoyl-ethanolamine + H2O = 1-O-(1Z-octadecenyl)-sn-glycero-3-phosphate + N-hexadecanoylethanolamine + H(+). It carries out the reaction 1-hexadecanoyl-sn-glycero-3-phosphoethanolamine + H2O = 1-hexadecanoyl-sn-glycero-3-phosphate + ethanolamine + H(+). It catalyses the reaction 1-O-hexadecyl-sn-glycero-3-phosphocholine + H2O = 1-O-hexadecyl-sn-glycero-3-phosphate + choline + H(+). The catalysed reaction is 1-(9Z-octadecenoyl)-sn-glycero-3-phosphocholine + H2O = 1-(9Z-octadecenoyl)-sn-glycero-3-phosphate + choline + H(+). The enzyme catalyses N,1-dihexadecanoyl-sn-glycero-3-phosphoethanolamine + H2O = N-hexadecanoylethanolamine + 1-hexadecanoyl-sn-glycero-3-phosphate + H(+). It carries out the reaction 1-O-(1Z-octadecenyl)-sn-glycero-3-phospho-(N-5Z,8Z,11Z,14Z-eicosatetraenoyl)-ethanolamine + H2O = 1-O-(1Z-octadecenyl)-sn-glycero-3-phosphate + N-(5Z,8Z,11Z,14Z-eicosatetraenoyl)-ethanolamine + H(+). It catalyses the reaction 1-O-(1Z-octadecenyl)-sn-glycero-3-phospho-(N-9Z-octadecenoyl)-ethanolamine + H2O = 1-O-(1Z-octadecenyl)-sn-glycero-3-phosphate + N-(9Z-octadecenoyl) ethanolamine + H(+). Lysophospholipase D activity is increased by magnesium and manganese and inhibited by calcium in a concentration dependent manner. Loss of lysophospholipase D activity by addition of EDTA. Its function is as follows. Hydrolyzes lysoglycerophospholipids to produce lysophosphatidic acid (LPA) and the corresponding amines. Shows a preference for 1-O-alkyl-sn-glycero-3-phosphocholine (lyso-PAF), lysophosphatidylethanolamine (lyso-PE) and lysophosphatidylcholine (lyso-PC). May be involved in bioactive N-acylethanolamine biosynthesis from both N-acyl-lysoplasmenylethanolamin (N-acyl-lysoPlsEt) and N-acyl-lysophosphatidylethanolamin (N-acyl-lysoPE). In addition, hydrolyzes glycerophospho-N-acylethanolamine to N-acylethanolamine. Does not display glycerophosphodiester phosphodiesterase activity, since it cannot hydrolyze either glycerophosphoinositol or glycerophosphocholine. In Homo sapiens (Human), this protein is Lysophospholipase D GDPD1.